We begin with the raw amino-acid sequence, 120 residues long: MFLLYEYDIFWAFLIISSAIPFLAFLISGVLSPIRKGPEKLSSYESGIEPIGDAWLQFRIRYYMFALVFVVFDVETVFLYPWAMSFDVLGVSAFIEAFVFVLILILGLVYAWRKGALEWS.

Transmembrane regions (helical) follow at residues 9–29 (IFWAFLIISSAIPFLAFLISG), 64–84 (MFALVFVVFDVETVFLYPWAM), and 88–108 (VLGVSAFIEAFVFVLILILGL).

The protein belongs to the complex I subunit 3 family. NDH is composed of at least 16 different subunits, 5 of which are encoded in the nucleus.

It is found in the plastid. Its subcellular location is the chloroplast thylakoid membrane. It carries out the reaction a plastoquinone + NADH + (n+1) H(+)(in) = a plastoquinol + NAD(+) + n H(+)(out). The enzyme catalyses a plastoquinone + NADPH + (n+1) H(+)(in) = a plastoquinol + NADP(+) + n H(+)(out). In terms of biological role, NDH shuttles electrons from NAD(P)H:plastoquinone, via FMN and iron-sulfur (Fe-S) centers, to quinones in the photosynthetic chain and possibly in a chloroplast respiratory chain. The immediate electron acceptor for the enzyme in this species is believed to be plastoquinone. Couples the redox reaction to proton translocation, and thus conserves the redox energy in a proton gradient. This is NAD(P)H-quinone oxidoreductase subunit 3, chloroplastic from Aethionema grandiflorum (Persian stone-cress).